The primary structure comprises 146 residues: D-aminoacyl-tRNA deacylase (146 aa).

The short motif at 137 to 138 (GP) is the Gly-cisPro motif, important for rejection of L-amino acids element.

This sequence belongs to the DTD family. Homodimer.

It is found in the cytoplasm. It catalyses the reaction glycyl-tRNA(Ala) + H2O = tRNA(Ala) + glycine + H(+). It carries out the reaction a D-aminoacyl-tRNA + H2O = a tRNA + a D-alpha-amino acid + H(+). Its function is as follows. An aminoacyl-tRNA editing enzyme that deacylates mischarged D-aminoacyl-tRNAs. Also deacylates mischarged glycyl-tRNA(Ala), protecting cells against glycine mischarging by AlaRS. Acts via tRNA-based rather than protein-based catalysis; rejects L-amino acids rather than detecting D-amino acids in the active site. By recycling D-aminoacyl-tRNA to D-amino acids and free tRNA molecules, this enzyme counteracts the toxicity associated with the formation of D-aminoacyl-tRNA entities in vivo and helps enforce protein L-homochirality. The protein is D-aminoacyl-tRNA deacylase of Desulfatibacillum aliphaticivorans.